Consider the following 448-residue polypeptide: 3-phosphoshikimate 1-carboxyvinyltransferase (448 aa).

Residues Lys-38, Ser-39, and Arg-43 each coordinate 3-phosphoshikimate. Lys-38 provides a ligand contact to phosphoenolpyruvate. Residues Gly-111 and Arg-140 each contribute to the phosphoenolpyruvate site. Ser-185, Gln-187, Asp-335, and Lys-362 together coordinate 3-phosphoshikimate. Gln-187 lines the phosphoenolpyruvate pocket. Residue Asp-335 is the Proton acceptor of the active site. Residues Arg-366 and Arg-408 each coordinate phosphoenolpyruvate.

It belongs to the EPSP synthase family. In terms of assembly, monomer.

The protein localises to the cytoplasm. The catalysed reaction is 3-phosphoshikimate + phosphoenolpyruvate = 5-O-(1-carboxyvinyl)-3-phosphoshikimate + phosphate. It functions in the pathway metabolic intermediate biosynthesis; chorismate biosynthesis; chorismate from D-erythrose 4-phosphate and phosphoenolpyruvate: step 6/7. Functionally, catalyzes the transfer of the enolpyruvyl moiety of phosphoenolpyruvate (PEP) to the 5-hydroxyl of shikimate-3-phosphate (S3P) to produce enolpyruvyl shikimate-3-phosphate and inorganic phosphate. This is 3-phosphoshikimate 1-carboxyvinyltransferase from Gloeothece citriformis (strain PCC 7424) (Cyanothece sp. (strain PCC 7424)).